Reading from the N-terminus, the 472-residue chain is WASH complex subunit 1 (472 aa).

A required for WASH complex assembly region spans residues 1–51; that stretch reads MPQNRSMESQAYSLPLILPDLRREEAIHQITDTLQHLQTVSNDIFSRILQR. 3 disordered regions span residues 289-365, 377-412, and 426-472; these read ENSR…SDGR, GIGK…GDLM, and ISGK…DWES. Pro residues-rich tracts occupy residues 301 to 319 and 327 to 336; these read LPPP…PPEP and SLAPPLPIPA. A VCA region spans residues 352–472; it reads QGAPKEVVNP…GDGDEEDWES (121 aa). The WH2 domain maps to 364–386; it reads GRASLLESIRQAGGIGKAKLRNV. A compositionally biased stretch (basic and acidic residues) spans 385–401; it reads NVKEKKLEKKKMKEQEQ.

Belongs to the WASH1 family. As to quaternary structure, component of the WASH complex.

The protein resides in the early endosome membrane. Its subcellular location is the recycling endosome membrane. Acts as a nucleation-promoting factor at the surface of endosomes, where it recruits and activates the Arp2/3 complex to induce actin polymerization, playing a key role in the fission of tubules that serve as transport intermediates during endosome sorting. The chain is WASH complex subunit 1 from Xenopus tropicalis (Western clawed frog).